The following is a 365-amino-acid chain: DNA replication and repair protein RecF (365 aa).

Residue Gly-30–Thr-37 coordinates ATP.

The protein belongs to the RecF family.

The protein localises to the cytoplasm. The RecF protein is involved in DNA metabolism; it is required for DNA replication and normal SOS inducibility. RecF binds preferentially to single-stranded, linear DNA. It also seems to bind ATP. The sequence is that of DNA replication and repair protein RecF from Shewanella woodyi (strain ATCC 51908 / MS32).